The sequence spans 822 residues: ATP-dependent zinc metalloprotease FTSH 8, mitochondrial (822 aa).

Residues 1–25 (MSLASLARALSRRSAPSSSRARQGF) show a composition bias toward low complexity. Disordered regions lie at residues 1 to 50 (MSLA…LHGG), 103 to 131 (NYYPKGKKEAPKGDGSNKSDSKQDSSTDD), and 202 to 221 (SSPQSNSQGQNTDAIITTND). The transit peptide at 1-93 (MSLASLARAL…LANPQFRRLF (93 aa)) directs the protein to the mitochondrion. Basic and acidic residues predominate over residues 108–127 (GKKEAPKGDGSNKSDSKQDS). 375-382 (GPPGTGKT) serves as a coordination point for ATP. Histidine 600 contributes to the Zn(2+) binding site. Glutamate 601 is an active-site residue. 2 residues coordinate Zn(2+): histidine 604 and aspartate 676. The interval 781-822 (PTNYDLFKQGFQDEEDSKNQEAAKTPQPDDDGTPSLGEVVPT) is disordered.

This sequence in the N-terminal section; belongs to the AAA ATPase family. The protein in the C-terminal section; belongs to the peptidase M41 family. Zn(2+) serves as cofactor.

The protein localises to the mitochondrion. Probable ATP-dependent zinc metallopeptidase. The protein is ATP-dependent zinc metalloprotease FTSH 8, mitochondrial (FTSH8) of Oryza sativa subsp. japonica (Rice).